Here is a 545-residue protein sequence, read N- to C-terminus: Zinc finger protein with KRAB and SCAN domains 4 (545 aa).

A disordered region spans residues 1–22; that stretch reads MAREPRKNAALDAQSAEDQTGL. Glycyl lysine isopeptide (Lys-Gly) (interchain with G-Cter in SUMO2) cross-links involve residues K26 and K29. Residues 34–55 form a disordered region; sequence ALTAEVRAPCSPARGPERSRQR. An SCAN box domain is found at 53 to 135; sequence RQRFRGFRYP…VLLEYLERQL (83 aa). Residues K178 and K222 each participate in a glycyl lysine isopeptide (Lys-Gly) (interchain with G-Cter in SUMO2) cross-link. One can recognise a KRAB domain in the interval 221–317; it reads LKMEDVALTL…QRKQKNAIGS (97 aa). C2H2-type zinc fingers lie at residues 320-342, 348-370, 376-398, 404-426, and 432-454; these read HYCHECGKSFAQSSGLTKHRRIH, YECEDCGKTFIGSSALVIHQRVH, YECEECGKVFSHSSNLIKHQRTH, YECDDCGKTFSQSCSLLEHHKIH, and YQCNMCGKAFRRNSHLLRHQRIH. Residues 455 to 467 show a composition bias toward basic and acidic residues; it reads GDKNVQNPEHGES. A disordered region spans residues 455 to 480; the sequence is GDKNVQNPEHGESWESQGRTESQWEN. A compositionally biased stretch (polar residues) spans 468-480; the sequence is WESQGRTESQWEN. 2 consecutive C2H2-type zinc fingers follow at residues 487-509 and 515-537; these read YKCNECERSFTRNRSLIEHQKIH and YQCDTCGKGFTRTSYLVQHQRSH.

This sequence belongs to the krueppel C2H2-type zinc-finger protein family. In terms of tissue distribution, expressed in adult heart, brain, placenta, lung and kidney, but not in adult liver and skeletal muscle. In 17-day old embryo, detected in liver, skeletal muscle, brain, heart and small intestine.

It localises to the nucleus. In terms of biological role, may be involved in the transcriptional activation of MDM2 and EP300 genes. In Homo sapiens (Human), this protein is Zinc finger protein with KRAB and SCAN domains 4 (ZKSCAN4).